Here is a 403-residue protein sequence, read N- to C-terminus: Ubiquitin-like modifier-activating enzyme 5 (403 aa).

Residues glycine 81, aspartate 102, lysine 125, asparagine 148, and asparagine 182 each coordinate ATP. Residues cysteine 224 and cysteine 227 each contribute to the Zn(2+) site. The active-site Glycyl thioester intermediate is cysteine 248. Residues cysteine 301 and cysteine 306 each contribute to the Zn(2+) site. A UFM1-interacting sequence (UIS) motif is present at residues 333 to 345; the sequence is VVHEDNEWGIELV. Positions 346-376 are linker; it reads SEVSEEELKNSSGPVPTLPEGITVAYTVPKK. A phosphoserine mark is found at serine 357 and serine 392. The UFC1-binding sequence (UFC) signature appears at 388-403; sequence DSGESLEDLMARMKNM.

The protein belongs to the ubiquitin-activating E1 family. UBA5 subfamily. In terms of assembly, homodimer; homodimerization is required for UFM1 activation. Interacts (via UIS motif) with UFM1; binds UFM1 via a trans-binding mechanism in which UFM1 interacts with distinct sites in both subunits of the UBA5 homodimer. Interacts (via C-terminus) with UFC1. Interacts (via UIS motif) with GABARAPL2 and, with lower affinity, with GABARAP and GABARAPL1.

It is found in the cytoplasm. The protein resides in the nucleus. Its subcellular location is the endoplasmic reticulum membrane. It localises to the golgi apparatus. In terms of biological role, E1-like enzyme which specifically catalyzes the first step in ufmylation. Activates UFM1 by first adenylating its C-terminal glycine residue with ATP, and thereafter linking this residue to the side chain of a cysteine residue in E1, yielding a UFM1-E1 thioester and free AMP. Activates UFM1 via a trans-binding mechanism, in which UFM1 interacts with distinct sites in both subunits of the UBA5 homodimer. Trans-binding also promotes stabilization of the UBA5 homodimer, and enhances ATP-binding. Transfer of UFM1 from UBA5 to the E2-like enzyme UFC1 also takes place using a trans mechanism. Ufmylation plays a key role in various processes, such as ribosome recycling, response to DNA damage, interferon response or reticulophagy (also called ER-phagy). Ufmylation is essential for erythroid differentiation of both megakaryocytes and erythrocytes. The polypeptide is Ubiquitin-like modifier-activating enzyme 5 (Mus musculus (Mouse)).